Reading from the N-terminus, the 214-residue chain is Redox-sensing transcriptional repressor Rex (214 aa).

Positions 17 to 56 form a DNA-binding region, H-T-H motif; it reads LYYRIFKRFHADQVEKASSKQIADAMGIDSATVRRDFSYF. 91 to 96 is a binding site for NAD(+); it reads GCGNIG.

The protein belongs to the transcriptional regulatory Rex family. Homodimer.

The protein localises to the cytoplasm. Its function is as follows. Modulates transcription in response to changes in cellular NADH/NAD(+) redox state. The chain is Redox-sensing transcriptional repressor Rex from Streptococcus pyogenes serotype M1.